A 305-amino-acid chain; its full sequence is Translation initiation factor eIF2B subunit alpha (305 aa).

Lys35 carries the N6-acetyllysine modification.

This sequence belongs to the eIF-2B alpha/beta/delta subunits family. As to quaternary structure, component of the translation initiation factor 2B (eIF2B) complex which is a heterodecamer of two sets of five different subunits: alpha, beta, gamma, delta and epsilon. Subunits alpha, beta and delta comprise a regulatory subcomplex and subunits epsilon and gamma comprise a catalytic subcomplex. Within the complex, the hexameric regulatory complex resides at the center, with the two heterodimeric catalytic subcomplexes bound on opposite sides.

Its subcellular location is the cytoplasm. It is found in the cytosol. With respect to regulation, activated by the chemical integrated stress response (ISR) inhibitor ISRIB which stimulates guanine nucleotide exchange factor activity for both phosphorylated and unphosphorylated eIF2. Functionally, acts as a component of the translation initiation factor 2B (eIF2B) complex, which catalyzes the exchange of GDP for GTP on eukaryotic initiation factor 2 (eIF2) gamma subunit. Its guanine nucleotide exchange factor activity is repressed when bound to eIF2 complex phosphorylated on the alpha subunit, thereby limiting the amount of methionyl-initiator methionine tRNA available to the ribosome and consequently global translation is repressed. This is Translation initiation factor eIF2B subunit alpha (Eif2b1) from Mus musculus (Mouse).